The primary structure comprises 282 residues: tRNA (guanine-N(1)-)-methyltransferase (282 aa).

Residue 145-150 coordinates S-adenosyl-L-methionine; the sequence is IGDYVL.

Belongs to the RNA methyltransferase TrmD family. In terms of assembly, homodimer.

The protein localises to the cytoplasm. The enzyme catalyses guanosine(37) in tRNA + S-adenosyl-L-methionine = N(1)-methylguanosine(37) in tRNA + S-adenosyl-L-homocysteine + H(+). Its function is as follows. Specifically methylates guanosine-37 in various tRNAs. The chain is tRNA (guanine-N(1)-)-methyltransferase from Streptomyces avermitilis (strain ATCC 31267 / DSM 46492 / JCM 5070 / NBRC 14893 / NCIMB 12804 / NRRL 8165 / MA-4680).